Reading from the N-terminus, the 649-residue chain is V-type ATP synthase subunit I (649 aa).

7 helical membrane-spanning segments follow: residues 312 to 332, 360 to 380, 455 to 475, 485 to 505, 520 to 540, 556 to 576, and 593 to 613; these read FLSF…GLIF, FMIL…FFGV, DNIL…LGML, IGWV…LQAV, GQVG…GGII, VFSD…GAMV, and VLII…GGVI.

This sequence belongs to the V-ATPase 116 kDa subunit family.

The protein localises to the cell membrane. Its function is as follows. Produces ATP from ADP in the presence of a proton gradient across the membrane. The sequence is that of V-type ATP synthase subunit I (atpI) from Chlamydia muridarum (strain MoPn / Nigg).